Consider the following 218-residue polypeptide: Peptide methionine sulfoxide reductase MsrA (218 aa).

Cysteine 57 is an active-site residue.

It belongs to the MsrA Met sulfoxide reductase family.

The enzyme catalyses L-methionyl-[protein] + [thioredoxin]-disulfide + H2O = L-methionyl-(S)-S-oxide-[protein] + [thioredoxin]-dithiol. It carries out the reaction [thioredoxin]-disulfide + L-methionine + H2O = L-methionine (S)-S-oxide + [thioredoxin]-dithiol. In terms of biological role, has an important function as a repair enzyme for proteins that have been inactivated by oxidation. Catalyzes the reversible oxidation-reduction of methionine sulfoxide in proteins to methionine. This chain is Peptide methionine sulfoxide reductase MsrA, found in Brucella suis biovar 1 (strain 1330).